A 2006-amino-acid chain; its full sequence is Sodium channel protein type 2 subunit alpha (2006 aa).

Serine 4 bears the Phosphoserine mark. A disordered region spans residues 28–61 (RIAEEKAKRPKQERKDEDDENGPKPNSDLEAGKS). A Glycyl lysine isopeptide (Lys-Gly) (interchain with G-Cter in SUMO1) cross-link involves residue lysine 38. One copy of the I repeat lies at 111-456 (ILTPFNPIRK…QQMLEQLKKQ (346 aa)). Residues 130 to 148 (LFNVLIMCTILTNCVFMTM) form a helical membrane-spanning segment. The chain crosses the membrane as a helical span at residues 156 to 176 (KNVEYTFTGIYTFESLIKILA). Residues 191-208 (WNWLDFTVITFAYVTEFV) form a helical membrane-spanning segment. A helical membrane pass occupies residues 215–231 (ALRTFRVLRALKTISVI). A helical membrane pass occupies residues 251–270 (VMILTVFCLSVFALIGLQLF). Cysteines 278 and 338 form a disulfide. N-linked (GlcNAc...) asparagine glycosylation is found at asparagine 285, asparagine 291, asparagine 297, asparagine 303, asparagine 308, and asparagine 340. Positions 370 to 394 (FSWAFLSLFRLMTQDFWENLYQLTL) form an intramembrane region, pore-forming. Residues 402–422 (MIFFVLVIFLGSFYLINLILA) form a helical membrane-spanning segment. Residues serine 468, serine 471, serine 484, serine 526, serine 528, serine 531, serine 553, serine 554, serine 558, serine 573, serine 576, serine 589, serine 610, serine 623, serine 687, serine 688, and serine 722 each carry the phosphoserine modification. Positions 494–529 (SSKSEKELKNRRKKKKQKEQAGEEEKEDAVRKSASE) are disordered. Basic and acidic residues predominate over residues 511 to 529 (KEQAGEEEKEDAVRKSASE). Positions 589 to 635 (SENDFADDEHSTFEDNDSRRDSLFVPHRHGERRPSNVSQASRASRGI) are disordered. Over residues 596–610 (DEHSTFEDNDSRRDS) the composition is skewed to basic and acidic residues. Residues 742–1014 (CCKPWLKVKH…QIAVGRMQKG (273 aa)) form an II repeat. A helical transmembrane segment spans residues 761-779 (FVDLAITICIVLNTLFMAM). A helical membrane pass occupies residues 791–810 (VLSVGNLVFTGIFTAEMFLK). A helical transmembrane segment spans residues 825 to 844 (NIFDGFIVSLSLMELGLANV). A helical transmembrane segment spans residues 847-864 (LSVLRSFRLLRVFKLAKS). Residues 881 to 899 (ALGNLTLVLAIIVFIFAVV) form a helical membrane-spanning segment. An intrachain disulfide couples cysteine 913 to cysteine 919. Residues 918–919 (DC) form a binds SCN2B region. Residues 929–949 (FFHSFLIVFRVLCGEWIETMW) constitute an intramembrane region (pore-forming). An intrachain disulfide couples cysteine 951 to cysteine 960. Residues 963–983 (VFMMVMVIGNLVVLNLFLALL) traverse the membrane as a helical segment. The tract at residues 1121 to 1167 (EEFSSESDMEESKEKLNATSSSEGSTVDIGAPAEGEQPEAEPEESLE) is disordered. Over residues 1156–1167 (EQPEAEPEESLE) the composition is skewed to acidic residues. An III repeat occupies 1191–1505 (KGKLWWNLRK…KKYYNAMKKL (315 aa)). Residues 1211–1228 (FETFIVFMILLSSGALAF) form a helical membrane-spanning segment. Residues 1242–1260 (MLEYADKVFTYIFILEMLL) form a helical membrane-spanning segment. A helical membrane pass occupies residues 1275–1293 (WCWLDFLIVDVSLVSLTAN). Residues 1302-1320 (AIKSLRTLRALRPLRALSR) form a helical membrane-spanning segment. The chain crosses the membrane as a helical span at residues 1338 to 1357 (IMNVLLVCLIFWLIFSIMGV). The cysteines at positions 1367 and 1387 are disulfide-linked. Positions 1410 to 1431 (GLGYLSLLQVATFKGWMDIMYA) form an intramembrane region, pore-forming. The helical transmembrane segment at 1449–1470 (YMYLYFVIFIIFGSFFTLNLFI) threads the bilayer. Serine 1507 carries the post-translational modification Phosphoserine. The IV repeat unit spans residues 1514-1812 (IPRPANKFQG…WEKFDPDATQ (299 aa)). A helical transmembrane segment spans residues 1534-1551 (FDISIMILICLNMVTMMV). The chain crosses the membrane as a helical span at residues 1563 to 1581 (ILYWINLVFIVLFTGECVL). The helical transmembrane segment at 1594–1611 (GWNIFDFVVVILSIVGMF) threads the bilayer. A helical membrane pass occupies residues 1625–1641 (LFRVIRLARIGRILRLI). The chain crosses the membrane as a helical span at residues 1661-1678 (LFNIGLLLFLVMFIYAIF). The segment at residues 1701-1723 (FGNSMICLFQITTSAGWDGLLAP) is an intramembrane region (pore-forming). Residues cysteine 1732 and cysteine 1747 are joined by a disulfide bond. Residues 1754-1776 (IFFFVSYIIISFLVVVNMYIAVI) traverse the membrane as a helical segment. The 30-residue stretch at 1906-1935 (EEVSAIVIQRAYRRYLLKQKVKKVSSIYKK) folds into the IQ domain. Serine 1931 is subject to Phosphoserine. Positions 1934-1965 (KKDKGKEDEGTPIKEDIITDKLNENSTPEKTD) are enriched in basic and acidic residues. The interval 1934–2006 (KKDKGKEDEG…KGKDIRESKK (73 aa)) is disordered. Phosphothreonine occurs at positions 1944, 1964, and 1967. A Phosphoserine modification is found at serine 1972. A compositionally biased stretch (basic and acidic residues) spans 1980-2006 (TKPEKEKFEKDKSEKEDKGKDIRESKK).

The protein belongs to the sodium channel (TC 1.A.1.10) family. Nav1.2/SCN2A subfamily. In terms of assembly, heterooligomer of a large alpha subunit and a smaller beta subunit. Heterooligomer with SCN2B or SCN4B; disulfide-linked. Interacts with NEDD4L. Interacts with CALM. Interacts with TMEM233. Post-translationally, sumoylated at Lys-38. Sumoylation is induced by hypoxia, increases voltage-gated sodium current and mediates the early response to acute hypoxia in neurons. Sumoylated SCN2A is located at the cell membrane. In terms of tissue distribution, expressed in brain (at protein level). Detected in hippocampus, cortex and brain stem.

It localises to the cell membrane. It carries out the reaction Na(+)(in) = Na(+)(out). Mediates the voltage-dependent sodium ion permeability of excitable membranes. Assuming opened or closed conformations in response to the voltage difference across the membrane, the protein forms a sodium-selective channel through which Na(+) ions may pass in accordance with their electrochemical gradient. Implicated in the regulation of hippocampal replay occurring within sharp wave ripples (SPW-R) important for memory. In Mus musculus (Mouse), this protein is Sodium channel protein type 2 subunit alpha.